An 86-amino-acid chain; its full sequence is Large ribosomal subunit protein bL31B (86 aa).

Belongs to the bacterial ribosomal protein bL31 family. Type B subfamily. As to quaternary structure, part of the 50S ribosomal subunit.

This Streptococcus uberis (strain ATCC BAA-854 / 0140J) protein is Large ribosomal subunit protein bL31B.